The primary structure comprises 956 residues: Bifunctional glutamine synthetase adenylyltransferase/adenylyl-removing enzyme (956 aa).

Residues 1-450 (MENMSEQALP…YFKETVGGQE (450 aa)) are adenylyl removase. The adenylyl transferase stretch occupies residues 456 to 956 (EQWTAQLWSL…IYEQVLNNGQ (501 aa)).

The protein belongs to the GlnE family. Mg(2+) serves as cofactor.

The enzyme catalyses [glutamine synthetase]-O(4)-(5'-adenylyl)-L-tyrosine + phosphate = [glutamine synthetase]-L-tyrosine + ADP. It catalyses the reaction [glutamine synthetase]-L-tyrosine + ATP = [glutamine synthetase]-O(4)-(5'-adenylyl)-L-tyrosine + diphosphate. Its function is as follows. Involved in the regulation of glutamine synthetase GlnA, a key enzyme in the process to assimilate ammonia. When cellular nitrogen levels are high, the C-terminal adenylyl transferase (AT) inactivates GlnA by covalent transfer of an adenylyl group from ATP to specific tyrosine residue of GlnA, thus reducing its activity. Conversely, when nitrogen levels are low, the N-terminal adenylyl removase (AR) activates GlnA by removing the adenylyl group by phosphorolysis, increasing its activity. The regulatory region of GlnE binds the signal transduction protein PII (GlnB) which indicates the nitrogen status of the cell. This chain is Bifunctional glutamine synthetase adenylyltransferase/adenylyl-removing enzyme, found in Shewanella loihica (strain ATCC BAA-1088 / PV-4).